A 366-amino-acid polypeptide reads, in one-letter code: Chorismate synthase (366 aa).

NADP(+) is bound by residues Arg48 and Arg54. FMN-binding positions include 125–127 (RSS), 241–242 (NA), Gly285, 300–304 (KPTSS), and Arg326.

The protein belongs to the chorismate synthase family. Homotetramer. Requires FMNH2 as cofactor.

It carries out the reaction 5-O-(1-carboxyvinyl)-3-phosphoshikimate = chorismate + phosphate. It functions in the pathway metabolic intermediate biosynthesis; chorismate biosynthesis; chorismate from D-erythrose 4-phosphate and phosphoenolpyruvate: step 7/7. Its function is as follows. Catalyzes the anti-1,4-elimination of the C-3 phosphate and the C-6 proR hydrogen from 5-enolpyruvylshikimate-3-phosphate (EPSP) to yield chorismate, which is the branch point compound that serves as the starting substrate for the three terminal pathways of aromatic amino acid biosynthesis. This reaction introduces a second double bond into the aromatic ring system. The sequence is that of Chorismate synthase from Cereibacter sphaeroides (strain ATCC 17023 / DSM 158 / JCM 6121 / CCUG 31486 / LMG 2827 / NBRC 12203 / NCIMB 8253 / ATH 2.4.1.) (Rhodobacter sphaeroides).